A 539-amino-acid chain; its full sequence is Glucans biosynthesis protein D (539 aa).

Positions 1 to 29 form a signal peptide, tat-type signal; the sequence is MNRRNLLKASMALAAYGSVSASGLFAARA.

It belongs to the OpgD/OpgG family. Post-translationally, predicted to be exported by the Tat system. The position of the signal peptide cleavage has not been experimentally proven.

It localises to the periplasm. It participates in glycan metabolism; osmoregulated periplasmic glucan (OPG) biosynthesis. Functionally, probably involved in the control of the structural glucose backbone of osmoregulated periplasmic glucans (OPGs). The sequence is that of Glucans biosynthesis protein D from Pseudomonas syringae pv. syringae (strain B728a).